The sequence spans 100 residues: Urease subunit gamma (100 aa).

Belongs to the urease gamma subunit family. In terms of assembly, heterotrimer of UreA (gamma), UreB (beta) and UreC (alpha) subunits. Three heterotrimers associate to form the active enzyme.

The protein localises to the cytoplasm. The enzyme catalyses urea + 2 H2O + H(+) = hydrogencarbonate + 2 NH4(+). The protein operates within nitrogen metabolism; urea degradation; CO(2) and NH(3) from urea (urease route): step 1/1. The protein is Urease subunit gamma of Synechocystis sp. (strain ATCC 27184 / PCC 6803 / Kazusa).